Here is a 491-residue protein sequence, read N- to C-terminus: Ketol-acid reductoisomerase (NADP(+)) (491 aa).

The KARI N-terminal Rossmann domain maps to 15 to 208 (AQLGKCRFMA…GGHRAGVLES (194 aa)). NADP(+)-binding positions include 45-48 (CGAQ), R68, R76, S78, and 108-110 (DKQ). The active site involves H132. Residue G158 coordinates NADP(+). KARI C-terminal knotted domains lie at 209–344 (SFVA…NAPQ) and 345–484 (FEGK…MTDM). The Mg(2+) site is built by D217, E221, E389, and E393. S414 is a substrate binding site.

This sequence belongs to the ketol-acid reductoisomerase family. Mg(2+) serves as cofactor.

It catalyses the reaction (2R)-2,3-dihydroxy-3-methylbutanoate + NADP(+) = (2S)-2-acetolactate + NADPH + H(+). It carries out the reaction (2R,3R)-2,3-dihydroxy-3-methylpentanoate + NADP(+) = (S)-2-ethyl-2-hydroxy-3-oxobutanoate + NADPH + H(+). It functions in the pathway amino-acid biosynthesis; L-isoleucine biosynthesis; L-isoleucine from 2-oxobutanoate: step 2/4. It participates in amino-acid biosynthesis; L-valine biosynthesis; L-valine from pyruvate: step 2/4. Functionally, involved in the biosynthesis of branched-chain amino acids (BCAA). Catalyzes an alkyl-migration followed by a ketol-acid reduction of (S)-2-acetolactate (S2AL) to yield (R)-2,3-dihydroxy-isovalerate. In the isomerase reaction, S2AL is rearranged via a Mg-dependent methyl migration to produce 3-hydroxy-3-methyl-2-ketobutyrate (HMKB). In the reductase reaction, this 2-ketoacid undergoes a metal-dependent reduction by NADPH to yield (R)-2,3-dihydroxy-isovalerate. This chain is Ketol-acid reductoisomerase (NADP(+)), found in Serratia proteamaculans (strain 568).